A 106-amino-acid chain; its full sequence is Programmed cell death activator egl-1 (106 aa).

A BH3-like region spans residues 73–81 (LAAMCDDFD).

In terms of assembly, interacts with ced-9; the interaction results in ced-4 release from the ced-4/ced-9 complex. Interaction with ced-9 may enhance interaction of ced-9 with drp-1, but not with ced-4. A ced-9/egl-1 complex may recruit drp-1 to the mitochondrial surface.

The protein localises to the synapse. Plays a major role in programmed cell death (PCD or apoptosis) by negatively regulating ced-9. Binds to and directly inhibits the activity of ced-9, releasing the cell death activator ced-4 from a ced-9/ced-4 containing protein complex and allowing ced-4 to activate the cell-killing caspase ced-3. Required to activate programmed cell death in the sister cells of the serotonergic neurosecretory motor (NSM) neurons during embryogenesis. Required to activate programmed cell death in the sister cells of the M4 motor neuron and I1 pharyngeal neuron during embryogenesis. During larval development, required for the elimination of transient presynaptic components upstream of ced-9, ced-4 and ced-3 apoptotic pathway. Together with ain-1, a component of the miRNA-induced-silencing complex (miRISC), and probably upstream of ced-3 and ced-4, regulates temporal cell fate patterning during larval development. Has been shown in two studies to be dispensable in mitochondrial dynamics and morphology during early embryonic development. However, one study shows that during larval development, egl-1 is involved in modulating mitochondrial dynamics, perhaps acting by stabilizing the interaction between ced-9 and drp-1 in order to promote mitochondrial fission. Involved in inducing mitochondrial fragmentation during apoptosis, probably acting via ced-9 and dynamin-related protein drp-1. This is Programmed cell death activator egl-1 from Caenorhabditis elegans.